The following is a 155-amino-acid chain: Sperm microtubule associated protein 1 (155 aa).

The chain is Sperm microtubule associated protein 1 (Spmap1) from Mus musculus (Mouse).